The primary structure comprises 545 residues: 2-succinyl-5-enolpyruvyl-6-hydroxy-3-cyclohexene-1-carboxylate synthase (545 aa).

Residues 184–209 (PLVPDPEPHGAPTPAGRPGGRPWTYT) are disordered. Over residues 195-205 (PTPAGRPGGRP) the composition is skewed to low complexity.

Belongs to the TPP enzyme family. MenD subfamily. As to quaternary structure, homodimer. It depends on Mg(2+) as a cofactor. Mn(2+) is required as a cofactor. The cofactor is thiamine diphosphate.

It catalyses the reaction isochorismate + 2-oxoglutarate + H(+) = 5-enolpyruvoyl-6-hydroxy-2-succinyl-cyclohex-3-ene-1-carboxylate + CO2. Its pathway is quinol/quinone metabolism; 1,4-dihydroxy-2-naphthoate biosynthesis; 1,4-dihydroxy-2-naphthoate from chorismate: step 2/7. It functions in the pathway quinol/quinone metabolism; menaquinone biosynthesis. In terms of biological role, catalyzes the thiamine diphosphate-dependent decarboxylation of 2-oxoglutarate and the subsequent addition of the resulting succinic semialdehyde-thiamine pyrophosphate anion to isochorismate to yield 2-succinyl-5-enolpyruvyl-6-hydroxy-3-cyclohexene-1-carboxylate (SEPHCHC). This chain is 2-succinyl-5-enolpyruvyl-6-hydroxy-3-cyclohexene-1-carboxylate synthase, found in Mycobacterium avium (strain 104).